We begin with the raw amino-acid sequence, 314 residues long: Acetyl-coenzyme A carboxylase carboxyl transferase subunit alpha (314 aa).

A CoA carboxyltransferase C-terminal domain is found at 32–289; sequence EIDMLEASLK…KKMFLKHLNE (258 aa).

Belongs to the AccA family. Acetyl-CoA carboxylase is a heterohexamer composed of biotin carboxyl carrier protein (AccB), biotin carboxylase (AccC) and two subunits each of ACCase subunit alpha (AccA) and ACCase subunit beta (AccD).

Its subcellular location is the cytoplasm. The catalysed reaction is N(6)-carboxybiotinyl-L-lysyl-[protein] + acetyl-CoA = N(6)-biotinyl-L-lysyl-[protein] + malonyl-CoA. The protein operates within lipid metabolism; malonyl-CoA biosynthesis; malonyl-CoA from acetyl-CoA: step 1/1. Component of the acetyl coenzyme A carboxylase (ACC) complex. First, biotin carboxylase catalyzes the carboxylation of biotin on its carrier protein (BCCP) and then the CO(2) group is transferred by the carboxyltransferase to acetyl-CoA to form malonyl-CoA. This Staphylococcus epidermidis (strain ATCC 35984 / DSM 28319 / BCRC 17069 / CCUG 31568 / BM 3577 / RP62A) protein is Acetyl-coenzyme A carboxylase carboxyl transferase subunit alpha.